The sequence spans 320 residues: Cytochrome f (320 aa).

Positions 1–35 are cleaved as a signal peptide; the sequence is MQTRNAFSWLKKQITRSISVSLMIYILTRTSISSA. Residues Tyr-36, Cys-56, Cys-59, and His-60 each coordinate heme. Residues 286 to 306 form a helical membrane-spanning segment; sequence VQGLLFFLASVILAQIFLVLK.

This sequence belongs to the cytochrome f family. In terms of assembly, the 4 large subunits of the cytochrome b6-f complex are cytochrome b6, subunit IV (17 kDa polypeptide, petD), cytochrome f and the Rieske protein, while the 4 small subunits are PetG, PetL, PetM and PetN. The complex functions as a dimer. Heme serves as cofactor.

It localises to the plastid. It is found in the chloroplast thylakoid membrane. Component of the cytochrome b6-f complex, which mediates electron transfer between photosystem II (PSII) and photosystem I (PSI), cyclic electron flow around PSI, and state transitions. This is Cytochrome f from Solanum bulbocastanum (Wild potato).